Consider the following 180-residue polypeptide: CASP-like protein 5A1 (180 aa).

Residues Met-1–Leu-36 are Cytoplasmic-facing. A helical transmembrane segment spans residues Gly-37–Val-57. Topologically, residues Ser-58–Ala-67 are extracellular. A helical transmembrane segment spans residues Phe-68 to Val-88. Residues Asp-89–Ser-102 are Cytoplasmic-facing. The chain crosses the membrane as a helical span at residues Leu-103–Ala-123. The Extracellular segment spans residues Cys-124–Ala-150. Residues Ala-151 to Trp-171 traverse the membrane as a helical segment. At Ser-172–Phe-180 the chain is on the cytoplasmic side.

It belongs to the Casparian strip membrane proteins (CASP) family. As to quaternary structure, homodimer and heterodimers.

It localises to the cell membrane. The protein is CASP-like protein 5A1 of Pteridium aquilinum subsp. aquilinum (Bracken fern).